A 239-amino-acid chain; its full sequence is Probable transcriptional regulatory protein ACL_0044 (239 aa).

The protein belongs to the TACO1 family.

Its subcellular location is the cytoplasm. This is Probable transcriptional regulatory protein ACL_0044 from Acholeplasma laidlawii (strain PG-8A).